We begin with the raw amino-acid sequence, 361 residues long: Phosphoserine aminotransferase (361 aa).

Arginine 43 provides a ligand contact to L-glutamate. Pyridoxal 5'-phosphate contacts are provided by residues 77 to 78, tryptophan 103, threonine 153, aspartate 173, and glutamine 196; that span reads AS. Lysine 197 carries the N6-(pyridoxal phosphate)lysine modification. 238–239 lines the pyridoxal 5'-phosphate pocket; the sequence is NT.

This sequence belongs to the class-V pyridoxal-phosphate-dependent aminotransferase family. SerC subfamily. As to quaternary structure, homodimer. Pyridoxal 5'-phosphate serves as cofactor.

It is found in the cytoplasm. The enzyme catalyses O-phospho-L-serine + 2-oxoglutarate = 3-phosphooxypyruvate + L-glutamate. It carries out the reaction 4-(phosphooxy)-L-threonine + 2-oxoglutarate = (R)-3-hydroxy-2-oxo-4-phosphooxybutanoate + L-glutamate. It functions in the pathway amino-acid biosynthesis; L-serine biosynthesis; L-serine from 3-phospho-D-glycerate: step 2/3. Its pathway is cofactor biosynthesis; pyridoxine 5'-phosphate biosynthesis; pyridoxine 5'-phosphate from D-erythrose 4-phosphate: step 3/5. Its function is as follows. Catalyzes the reversible conversion of 3-phosphohydroxypyruvate to phosphoserine and of 3-hydroxy-2-oxo-4-phosphonooxybutanoate to phosphohydroxythreonine. This chain is Phosphoserine aminotransferase, found in Pseudomonas aeruginosa (strain LESB58).